A 186-amino-acid chain; its full sequence is Ribosome-recycling factor (186 aa).

This sequence belongs to the RRF family.

It is found in the cytoplasm. Its function is as follows. Responsible for the release of ribosomes from messenger RNA at the termination of protein biosynthesis. May increase the efficiency of translation by recycling ribosomes from one round of translation to another. The polypeptide is Ribosome-recycling factor (Chelativorans sp. (strain BNC1)).